We begin with the raw amino-acid sequence, 86 residues long: Small ribosomal subunit protein bS16 (86 aa).

The protein belongs to the bacterial ribosomal protein bS16 family.

The chain is Small ribosomal subunit protein bS16 from Hamiltonella defensa subsp. Acyrthosiphon pisum (strain 5AT).